Here is an 82-residue protein sequence, read N- to C-terminus: Small ribosomal subunit protein uS17 (82 aa).

Belongs to the universal ribosomal protein uS17 family. As to quaternary structure, part of the 30S ribosomal subunit.

In terms of biological role, one of the primary rRNA binding proteins, it binds specifically to the 5'-end of 16S ribosomal RNA. The polypeptide is Small ribosomal subunit protein uS17 (Rickettsia rickettsii (strain Iowa)).